The primary structure comprises 286 residues: tRNA pseudouridine synthase A (286 aa).

The active-site Nucleophile is Asp60. A substrate-binding site is contributed by Tyr132.

The protein belongs to the tRNA pseudouridine synthase TruA family. As to quaternary structure, homodimer.

It catalyses the reaction uridine(38/39/40) in tRNA = pseudouridine(38/39/40) in tRNA. Formation of pseudouridine at positions 38, 39 and 40 in the anticodon stem and loop of transfer RNAs. This Mycobacterium leprae (strain TN) protein is tRNA pseudouridine synthase A.